Consider the following 744-residue polypeptide: Junctophilin-3 (744 aa).

Topologically, residues 1–723 (MSSGGRFNFD…LKSSTGSAPI (723 aa)) are cytoplasmic. MORN repeat units follow at residues 15–37 (YCGGWEDGKAHGHGVCTGPKGQG), 39–60 (YTGSWSHGFEVLGVYTWPSGNT), 61–82 (YQGTWAQGKRHGIGLESKGKWV), 83–105 (YKGEWTHGFKGRYGVRECTGNGA), 107–129 (YEGTWSNGLQDGYGTETYSDGGT), and 130–152 (YQGQWVGGMRQGYGVRQSVPYGM). Residues 230-252 (SKSSLASQRSKQSSFRSEAGMST) form a disordered region. The segment covering 231–244 (KSSLASQRSKQSSF) has biased composition (low complexity). 2 MORN repeats span residues 288–310 (YVGEWKNDKRSGFGVSQRSDGLK) and 311–333 (YEGEWVSNRRHGYGCMTFPDGTK). At serine 440 the chain carries Phosphoserine. Threonine 451 is modified (phosphothreonine). 2 disordered regions span residues 451–603 (TPLQ…LLEP) and 624–677 (CPQD…ESLR). Serine 457 is subject to Phosphoserine. A Phosphothreonine modification is found at threonine 471. Phosphoserine occurs at positions 475 and 506. Serine 699 and serine 706 each carry phosphoserine. The helical; Anchor for type IV membrane protein transmembrane segment at 724–744 (LVVMVILLNIGVAILFINFFI) threads the bilayer.

Belongs to the junctophilin family. Specifically expressed in brain. Highest levels in the olfactory tubercle, caudate putamen, nucleus accumbens, hippocampal formation, piriform cortex and cerebellar cortex. Expressed in disctete neurons sites. In hippocampal formation, expressed in dendrites of hippocampal pyramidal and denate granule cells. In cerebellum, it is highly expressed in Purkinge cells, while it is weakly expressed in granular cells.

Its subcellular location is the cell membrane. It localises to the endoplasmic reticulum membrane. Functionally, junctophilins contribute to the formation of junctional membrane complexes (JMCs) which link the plasma membrane with the endoplasmic or sarcoplasmic reticulum in excitable cells. Provides a structural foundation for functional cross-talk between the cell surface and intracellular calcium release channels. JPH3 is brain-specific and appears to have an active role in certain neurons involved in motor coordination and memory. The polypeptide is Junctophilin-3 (Jph3) (Mus musculus (Mouse)).